We begin with the raw amino-acid sequence, 184 residues long: UPF0340 protein TTE0860 (184 aa).

This sequence belongs to the UPF0340 family.

The protein is UPF0340 protein TTE0860 of Caldanaerobacter subterraneus subsp. tengcongensis (strain DSM 15242 / JCM 11007 / NBRC 100824 / MB4) (Thermoanaerobacter tengcongensis).